The sequence spans 603 residues: Glutamyl-tRNA(Gln) amidotransferase subunit B, mitochondrial (603 aa).

Residues 1–32 (MIRHRLRLALSAAPVTATGRRTRSKTAPRRSL) constitute a mitochondrion transit peptide. The interval 12–59 (AAPVTATGRRTRSKTAPRRSLSTQQTQSSASSSSNNLDGDGRAFVPLR) is disordered. Positions 31 to 48 (SLSTQQTQSSASSSSNNL) are enriched in low complexity.

It belongs to the GatB/GatE family. GatB subfamily. Subunit of the heterotrimeric GatCAB amidotransferase (AdT) complex, composed of A, B and C subunits.

It localises to the mitochondrion. It catalyses the reaction L-glutamyl-tRNA(Gln) + L-glutamine + ATP + H2O = L-glutaminyl-tRNA(Gln) + L-glutamate + ADP + phosphate + H(+). Functionally, allows the formation of correctly charged Gln-tRNA(Gln) through the transamidation of misacylated Glu-tRNA(Gln) in the mitochondria. The reaction takes place in the presence of glutamine and ATP through an activated gamma-phospho-Glu-tRNA(Gln). This is Glutamyl-tRNA(Gln) amidotransferase subunit B, mitochondrial from Arthroderma otae (strain ATCC MYA-4605 / CBS 113480) (Microsporum canis).